Consider the following 554-residue polypeptide: 5'-AMP-activated protein kinase catalytic subunit alpha-1 (554 aa).

The Protein kinase domain maps to 22 to 274 (YILGDTLGVG…IKDIREHEWF (253 aa)). Thr27 carries the post-translational modification Phosphothreonine. Residues 28-36 (LGVGTFGKV) and Lys51 each bind ATP. Asp145 (proton acceptor) is an active-site residue. Thr178 carries the phosphothreonine; by LKB1 and CaMKK2 modification. Phosphothreonine occurs at positions 264 and 350. Positions 297–376 (EALKEVCEKF…PERVPFLVAE (80 aa)) are AIS. Residue Ser351 is modified to Phosphoserine. Ser355 is subject to Phosphoserine; by ULK1. Residue Thr363 is modified to Phosphothreonine; by ULK1. Position 377 is a phosphothreonine (Thr377). Ser392 bears the Phosphoserine; by ULK1 mark. Position 462 is a phosphoserine (Ser462). Positions 480–500 (KSGTATPQRSGSVSNYRSCQR) are enriched in polar residues. The tract at residues 480–531 (KSGTATPQRSGSVSNYRSCQRSDSDAEAQGKSSEVSLTSSVTSLDSSPVDLT) is disordered. Ser481 carries the phosphoserine; by ULK1 modification. Thr483 is modified (phosphothreonine; by ULK1). Phosphothreonine is present on Thr485. A phosphoserine mark is found at Ser491, Ser503, Ser519, and Ser522. A compositionally biased stretch (low complexity) spans 511 to 530 (SSEVSLTSSVTSLDSSPVDL).

Belongs to the protein kinase superfamily. CAMK Ser/Thr protein kinase family. SNF1 subfamily. As to quaternary structure, AMPK is a heterotrimer of an alpha catalytic subunit (PRKAA1 or PRKAA2), a beta (PRKAB1 or PRKAB2) and a gamma non-catalytic subunits (PRKAG1, PRKAG2 or PRKAG3). Interacts with FNIP1 and FNIP2. Mg(2+) serves as cofactor. In terms of processing, ubiquitinated. Post-translationally, phosphorylated at Thr-183 by STK11/LKB1 in complex with STE20-related adapter-alpha (STRADA) pseudo kinase and CAB39. Also phosphorylated at Thr-183 by CAMKK2; triggered by a rise in intracellular calcium ions, without detectable changes in the AMP/ATP ratio. CAMKK1 can also phosphorylate Thr-183, but at a much lower level. Dephosphorylated by protein phosphatase 2A and 2C (PP2A and PP2C). Phosphorylated by ULK1 and ULK2; leading to negatively regulate AMPK activity and suggesting the existence of a regulatory feedback loop between ULK1, ULK2 and AMPK. Dephosphorylated by PPM1A and PPM1B. Glycosylated; O-GlcNAcylated by OGT, promoting the AMP-activated protein kinase (AMPK) activity.

Its subcellular location is the cytoplasm. It is found in the nucleus. It catalyses the reaction L-seryl-[protein] + ATP = O-phospho-L-seryl-[protein] + ADP + H(+). The enzyme catalyses L-threonyl-[protein] + ATP = O-phospho-L-threonyl-[protein] + ADP + H(+). The catalysed reaction is L-seryl-[acetyl-CoA carboxylase] + ATP = O-phospho-L-seryl-[acetyl-CoA carboxylase] + ADP + H(+). It carries out the reaction L-seryl-[3-hydroxy-3-methylglutaryl-coenzyme A reductase] + ATP = O-phospho-L-seryl-[3-hydroxy-3-methylglutaryl-coenzyme A reductase] + ADP + H(+). It catalyses the reaction L-seryl-[tau protein] + ATP = O-phospho-L-seryl-[tau protein] + ADP + H(+). The enzyme catalyses L-threonyl-[tau protein] + ATP = O-phospho-L-threonyl-[tau protein] + ADP + H(+). With respect to regulation, activated by phosphorylation on Thr-183. Binding of AMP to non-catalytic gamma subunit (PRKAG1, PRKAG2 or PRKAG3) results in allosteric activation, inducing phosphorylation on Thr-183. AMP-binding to gamma subunit also sustains activity by preventing dephosphorylation of Thr-183. ADP also stimulates Thr-183 phosphorylation, without stimulating already phosphorylated AMPK. ATP promotes dephosphorylation of Thr-183, rendering the enzyme inactive. Under physiological conditions AMPK mainly exists in its inactive form in complex with ATP, which is much more abundant than AMP. Selectively inhibited by compound C (6-[4-(2-Piperidin-1-yl-ethoxy)-phenyl)]-3-pyridin-4-yl-pyyrazolo[1,5-a] pyrimidine. Activated by resveratrol, a natural polyphenol present in red wine, and S17834, a synthetic polyphenol. Its function is as follows. Catalytic subunit of AMP-activated protein kinase (AMPK), an energy sensor protein kinase that plays a key role in regulating cellular energy metabolism. In response to reduction of intracellular ATP levels, AMPK activates energy-producing pathways and inhibits energy-consuming processes: inhibits protein, carbohydrate and lipid biosynthesis, as well as cell growth and proliferation. AMPK acts via direct phosphorylation of metabolic enzymes, and by longer-term effects via phosphorylation of transcription regulators. Regulates lipid synthesis by phosphorylating and inactivating lipid metabolic enzymes such as ACACA, ACACB, GYS1, HMGCR and LIPE; regulates fatty acid and cholesterol synthesis by phosphorylating acetyl-CoA carboxylase (ACACA and ACACB) and hormone-sensitive lipase (LIPE) enzymes, respectively. Promotes lipolysis of lipid droplets by mediating phosphorylation of isoform 1 of CHKA (CHKalpha2). Regulates insulin-signaling and glycolysis by phosphorylating IRS1, PFKFB2 and PFKFB3. AMPK stimulates glucose uptake in muscle by increasing the translocation of the glucose transporter SLC2A4/GLUT4 to the plasma membrane, possibly by mediating phosphorylation of TBC1D4/AS160. Regulates transcription and chromatin structure by phosphorylating transcription regulators involved in energy metabolism such as CRTC2/TORC2, FOXO3, histone H2B, HDAC5, MEF2C, MLXIPL/ChREBP, EP300, HNF4A, p53/TP53, SREBF1, SREBF2 and PPARGC1A. Acts as a key regulator of glucose homeostasis in liver by phosphorylating CRTC2/TORC2, leading to CRTC2/TORC2 sequestration in the cytoplasm. In response to stress, phosphorylates 'Ser-36' of histone H2B (H2BS36ph), leading to promote transcription. Acts as a key regulator of cell growth and proliferation by phosphorylating FNIP1, TSC2, RPTOR, WDR24 and ATG1/ULK1: in response to nutrient limitation, negatively regulates the mTORC1 complex by phosphorylating RPTOR component of the mTORC1 complex and by phosphorylating and activating TSC2. Also phosphorylates and inhibits GATOR2 subunit WDR24 in response to nutrient limitation, leading to suppress glucose-mediated mTORC1 activation. In response to energetic stress, phosphorylates FNIP1, inactivating the non-canonical mTORC1 signaling, thereby promoting nuclear translocation of TFEB and TFE3, and inducing transcription of lysosomal or autophagy genes. In response to nutrient limitation, promotes autophagy by phosphorylating and activating ATG1/ULK1. In that process also activates WDR45/WIPI4. Phosphorylates CASP6, thereby preventing its autoprocessing and subsequent activation. In response to nutrient limitation, phosphorylates transcription factor FOXO3 promoting FOXO3 mitochondrial import. Also acts as a regulator of cellular polarity by remodeling the actin cytoskeleton; probably by indirectly activating myosin. AMPK also acts as a regulator of circadian rhythm by mediating phosphorylation of CRY1, leading to destabilize it. May regulate the Wnt signaling pathway by phosphorylating CTNNB1, leading to stabilize it. Also has tau-protein kinase activity: in response to amyloid beta A4 protein (APP) exposure, activated by CAMKK2, leading to phosphorylation of MAPT/TAU; however the relevance of such data remains unclear in vivo. Also phosphorylates CFTR, EEF2K, KLC1, NOS3 and SLC12A1. Regulates hepatic lipogenesis. Activated via SIRT3, represses sterol regulatory element-binding protein (SREBP) transcriptional activities and ATP-consuming lipogenesis to restore cellular energy balance. Upon stress, regulates mitochondrial fragmentation through phosphorylation of MTFR1L. The chain is 5'-AMP-activated protein kinase catalytic subunit alpha-1 (PRKAA1) from Pongo abelii (Sumatran orangutan).